The chain runs to 590 residues: Glypican-3 (590 aa).

The signal sequence occupies residues 1-25; the sequence is MMPGLKLYGALILCVLVLPFSRPSS. Disulfide bonds link C30–C67, C60–C255, C68–C258, C190–C342, C245–C278, C267–C418, and C271–C406. 2 N-linked (GlcNAc...) asparagine glycosylation sites follow: N119 and N234. N414 carries an N-linked (GlcNAc...) asparagine glycan. Disordered stretches follow at residues 429-450 and 476-520; these read PGPGLKRVHPHGSESKQKTPEP and WRAR…SGLG. Over residues 495 to 513 the composition is skewed to acidic residues; it reads TDEDEEGLESGDCDDEDEC. O-linked (Xyl...) (glycosaminoglycan) serine glycosylation is found at S504 and S517.

This sequence belongs to the glypican family. In terms of assembly, heterodimer; disulfide-linked. Cleavage by a furin-like convertase results in production of alpha and beta chains which form a disulfide-linked heterodimer. In terms of processing, O-glycosylated; contains heparan sulfate and/or chondroitin sulfate. Cleaved intracellularly by a furin-like convertase to generate 2 subunits, alpha and beta, which remain associated through disulfide bonds and are associated with the cell surface via the GPI-anchor. This processing is essential for its role in inhibition of hedgehog signaling. A second proteolytic event may result in cleavage of the protein on the cell surface, separating it from the GPI-anchor and leading to its shedding from the cell surface. As to expression, maternally expressed and is almost ubiquitous during blastula and gastrula stages but becomes restricted to the prospective hindbrain by 24 hours post-fertilization.

Its subcellular location is the cell membrane. Functionally, cell surface proteoglycan. Negatively regulates the hedgehog signaling pathway. Positively regulates the canonical and non-canonical Wnt signaling pathways. Binds to CD81 which decreases the availability of free CD81 for binding to the transcriptional repressor HHEX, resulting in nuclear translocation of HHEX and transcriptional repression. Inhibits the dipeptidyl peptidase activity of DPP4. Plays a role in limb patterning and skeletal development. Modulates the effects of growth factors on renal branching morphogenesis. Required for coronary vascular development. Plays a role in regulating cell movements during gastrulation. This is Glypican-3 from Danio rerio (Zebrafish).